The chain runs to 528 residues: CTD kinase subunit alpha (528 aa).

Residues 1-15 (MSYNNGNTYSKSYSR) are compositionally biased toward polar residues. Residues 1–148 (MSYNNGNTYS…NTSNDIKNGY (148 aa)) are disordered. S14 is subject to Phosphoserine; by autocatalysis. The Nuclear localization signal motif lies at 37-44 (PPKRIRTD). Positions 45–103 (SGYQSNMDNISSHRVNSNDQPGHTKSRGNNNLSRYNDTSFQTSSRYQGSRYNNNNTSYE) are enriched in polar residues. Positions 104 to 118 (NRPKSIKRDETKAEF) are enriched in basic and acidic residues. Residues 134-144 (YNNSSNTSNDI) are compositionally biased toward polar residues. Residues 183-469 (YLRIMQVGEG…ATEALQSDYF (287 aa)) enclose the Protein kinase domain. ATP is bound by residues 189–197 (VGEGTYGKV) and K212. Catalysis depends on D306, which acts as the Proton acceptor. T338 bears the Phosphothreonine mark. The interval 497–528 (QKRPNILSTNTNNKGNGNSNNNNNNNNDDDDK) is disordered. A compositionally biased stretch (low complexity) spans 504–522 (STNTNNKGNGNSNNNNNNN).

This sequence belongs to the protein kinase superfamily. CMGC Ser/Thr protein kinase family. CDC2/CDKX subfamily. As to quaternary structure, CTDK-I consists of three subunits, CTK1, CTK2 and CTK3 (also called alpha, beta and gamma). Interacts directly with the CTK2 and CTK3 subunits, this interaction is required for kinase activity. Interacts with RNA polymerase I. Interacts with SNF1, but only at low glucose concentrations. Interacts with translating ribosomes. In terms of processing, phosphorylated on Thr-338 by CAK1. Phosphorylation is essential for the elevated CTD Ser-2 phosphorylation and required to activate transcription of stationary-phase genes during the diauxic shift.

It localises to the nucleus. The protein resides in the nucleolus. The protein localises to the cytoplasm. The enzyme catalyses [DNA-directed RNA polymerase] + ATP = phospho-[DNA-directed RNA polymerase] + ADP + H(+). Its function is as follows. Catalytic subunit of the CTDK-I complex, which hyperphosphorylates the C-terminal heptapeptide repeat domain (CTD) of the largest RNA polymerase II subunit. CTDK-I phosphorylates 'Ser-5' if the CTD substrate is not phosphorylated at 'Ser-5', but will phosphorylate 'Ser-2' of a CTD substrate if 'Ser-5' is already phosphorylated. CTDK-I is also more reactive toward substrates that are prephosphorylated at 'Ser-2' or 'Ser-5' compared with an unphosphorylated CTD substrate, therefore efficiently creating doubly phosphorylated CTD repeats. Involved in RNA polymerase II transcriptional elongation, and through PTI1, pre-mRNA 3'-end processing. Participates in both positive and negative regulation of CTD phosphorylation. Required for DNA damage induced transcription, including the expression of the RNR genes, and reprogramming of gene expression upon amino acid starvation. Required for SET2 mediated H3K36 methylation. Also regulates H3K4 methylation. Controls the maintenance of suppressive chromatin in the coding regions of genes by both promoting H3K36 methylation, which leads to histone deacetylation, and catalyzing phosphorylation of the CTD required to localize H3K4 chromatin modification specifically to the 5' ends of genes, thereby creating a boundary for H3K4 methylation that prevents a mark associated with transcriptional initiation from spreading into the bodies of genes. Involved in RNA polymerase I transcription. Involved in telomere maintenance. Acts together with SNF1 to induce GSY2 transcription in response to glucose limitation. Involved in the adaptation to alternative carbon sources, including galactose, glycerol and ethanol, but not raffinose. Required for the integrity of the rDNA locus. Functions in translation elongation by enhancing decoding fidelity. Needed for translational accuracy by phosphorylating RPS2. The chain is CTD kinase subunit alpha (CTK1) from Saccharomyces cerevisiae (strain ATCC 204508 / S288c) (Baker's yeast).